A 182-amino-acid polypeptide reads, in one-letter code: Large ribosomal subunit protein uL6 (182 aa).

The protein belongs to the universal ribosomal protein uL6 family. As to quaternary structure, part of the 50S ribosomal subunit.

Its function is as follows. This protein binds to the 23S rRNA, and is important in its secondary structure. It is located near the subunit interface in the base of the L7/L12 stalk, and near the tRNA binding site of the peptidyltransferase center. The polypeptide is Large ribosomal subunit protein uL6 (Methanococcus vannielii).